Here is a 65-residue protein sequence, read N- to C-terminus: DQVRKCLSDTDCTNGEKCVQKNKICSTIVEIQRCEKEHFTIPCKSNNDCQVWAHEKICNKLPWGL.

The protein belongs to the protease inhibitor I44 family.

The protein localises to the secreted. Inhibits carboxypeptidase A. The chain is Carboxypeptidase A inhibitor from Ascaris suum (Pig roundworm).